The sequence spans 43 residues: Protein PsbN (43 aa).

Residues 7-29 traverse the membrane as a helical segment; it reads LSIALAAVCIGVTGYSIYLSFGP.

The protein belongs to the PsbN family.

The protein localises to the cellular thylakoid membrane. May play a role in photosystem I and II biogenesis. The polypeptide is Protein PsbN (Thermosynechococcus vestitus (strain NIES-2133 / IAM M-273 / BP-1)).